The following is a 216-amino-acid chain: Methylthioribulose-1-phosphate dehydratase (216 aa).

Residues His101 and His103 each coordinate Zn(2+).

Belongs to the aldolase class II family. MtnB subfamily. Zn(2+) serves as cofactor.

It carries out the reaction 5-(methylsulfanyl)-D-ribulose 1-phosphate = 5-methylsulfanyl-2,3-dioxopentyl phosphate + H2O. It functions in the pathway amino-acid biosynthesis; L-methionine biosynthesis via salvage pathway; L-methionine from S-methyl-5-thio-alpha-D-ribose 1-phosphate: step 2/6. Catalyzes the dehydration of methylthioribulose-1-phosphate (MTRu-1-P) into 2,3-diketo-5-methylthiopentyl-1-phosphate (DK-MTP-1-P). The chain is Methylthioribulose-1-phosphate dehydratase from Bradyrhizobium sp. (strain BTAi1 / ATCC BAA-1182).